A 2181-amino-acid polypeptide reads, in one-letter code: Non-reducing polyketide synthase dpmaA (2181 aa).

The segment at 74 to 180 (QWVKGNSTQP…LALCCGAYID (107 aa)) is N-terminal acylcarrier protein transacylase domain (SAT). Residues 347-779 (QAQLLVLGPV…GTNAAMLVCQ (433 aa)) form the Ketosynthase family 3 (KS3) domain. Active-site for beta-ketoacyl synthase activity residues include Cys525, His661, and His702. The segment at 891–1193 (VLAGQTGRRV…SFYPAALGEP (303 aa)) is malonyl-CoA:ACP transacylase (MAT) domain. Ser977 functions as the For acyl/malonyl transferase activity in the catalytic mechanism. The tract at residues 1269–1401 (VSLIGKTQNA…GVITLQEVYS (133 aa)) is N-terminal hotdog fold. One can recognise a PKS/mFAS DH domain in the interval 1269 to 1579 (VSLIGKTQNA…FQKIAISSLK (311 aa)). The product template (PT) domain stretch occupies residues 1276 to 1573 (QNAGVQTVEY…TILGAKFQKI (298 aa)). Residues 1425–1579 (SASVVQGDFI…FQKIAISSLK (155 aa)) form a C-terminal hotdog fold region. Polar residues predominate over residues 1587–1603 (GVPQTSGGRTPSSSITE). 2 disordered regions span residues 1587 to 1618 (GVPQ…PIPG) and 1652 to 1675 (ISGS…AMET). The span at 1653–1670 (SGSSRSTSSSPPSLESRS) shows a compositional bias: low complexity. One can recognise a Carrier domain in the interval 1677–1753 (EITEGAGSAL…TLFHTIFPQQ (77 aa)). Residue Ser1713 is modified to O-(pantetheine 4'-phosphoryl)serine. Residues 1982–2164 (EFMNCLFSYN…QSGFDHIDWT (183 aa)) form a methyltransferase (CMeT) domain region.

The protein operates within secondary metabolite biosynthesis; terpenoid biosynthesis. Non-reducing polyketide synthase; part of the gene cluster that mediates the biosynthesis of the diterpenoid pyrones subglutinols A and B. The first step of the pathway is the synthesis of the alpha-pyrone moiety by the polyketide synthase dpmaA via condensation of one acetyl-CoA starter unit with 3 malonyl-CoA units and 2 methylations. The alpha-pyrone is then combined with geranylgeranyl pyrophosphate (GGPP) formed by the GGPP synthase dpmaD through the action of the prenyltransferase dpmaC to yield a linear alpha-pyrone diterpenoid. Subsequent steps in the diterpenoid pyrone biosynthetic pathway involve the decalin core formation, which is initiated by the epoxidation of the C10-C11 olefin by the FAD-dependent oxidoreductase dpmaE, and is followed by a cyclization cascade catalyzed by the terpene cyclase dpmaB. The dehydrogenase dpmaF is then involved in tetrahydrofuran (THF) ring formation at the C5 unit to complete the formation of subglutinols A and B. This is Non-reducing polyketide synthase dpmaA from Metarhizium anisopliae (Entomophthora anisopliae).